Here is a 37-residue protein sequence, read N- to C-terminus: Large ribosomal subunit protein bL36 (37 aa).

It belongs to the bacterial ribosomal protein bL36 family.

In Desulforudis audaxviator (strain MP104C), this protein is Large ribosomal subunit protein bL36.